Consider the following 142-residue polypeptide: Large ribosomal subunit protein bL17 (142 aa).

Belongs to the bacterial ribosomal protein bL17 family. In terms of assembly, part of the 50S ribosomal subunit. Contacts protein L32.

The chain is Large ribosomal subunit protein bL17 from Wolbachia sp. subsp. Brugia malayi (strain TRS).